The following is a 662-amino-acid chain: Bifunctional polymyxin resistance protein ArnA (662 aa).

Residues 1 to 307 form a formyltransferase ArnAFT region; the sequence is MTSKAVVFAY…ELGLVEGARL (307 aa). H106 acts as the Proton donor; for formyltransferase activity in catalysis. Residues R116 and 138-142 each bind (6R)-10-formyltetrahydrofolate; that span reads VERAD. Residues 316–662 form a dehydrogenase ArnADH region; the sequence is RRTRVLILGV…EALREREAQA (347 aa). NAD(+) is bound by residues D349 and 370–371; that span reads DI. UDP-alpha-D-glucuronate-binding positions include A395, Y400, and 434–435; that span reads TS. Residue E436 is the Proton acceptor; for decarboxylase activity of the active site. UDP-alpha-D-glucuronate-binding positions include R462, N493, 527 to 536, and Y614; that span reads RLVDGGAQKR. The active-site Proton donor; for decarboxylase activity is the R620.

The protein in the N-terminal section; belongs to the Fmt family. UDP-L-Ara4N formyltransferase subfamily. This sequence in the C-terminal section; belongs to the NAD(P)-dependent epimerase/dehydratase family. UDP-glucuronic acid decarboxylase subfamily. In terms of assembly, homohexamer, formed by a dimer of trimers.

The enzyme catalyses UDP-alpha-D-glucuronate + NAD(+) = UDP-beta-L-threo-pentopyranos-4-ulose + CO2 + NADH. It carries out the reaction UDP-4-amino-4-deoxy-beta-L-arabinose + (6R)-10-formyltetrahydrofolate = UDP-4-deoxy-4-formamido-beta-L-arabinose + (6S)-5,6,7,8-tetrahydrofolate + H(+). It functions in the pathway nucleotide-sugar biosynthesis; UDP-4-deoxy-4-formamido-beta-L-arabinose biosynthesis; UDP-4-deoxy-4-formamido-beta-L-arabinose from UDP-alpha-D-glucuronate: step 1/3. Its pathway is nucleotide-sugar biosynthesis; UDP-4-deoxy-4-formamido-beta-L-arabinose biosynthesis; UDP-4-deoxy-4-formamido-beta-L-arabinose from UDP-alpha-D-glucuronate: step 3/3. The protein operates within bacterial outer membrane biogenesis; lipopolysaccharide biosynthesis. Bifunctional enzyme that catalyzes the oxidative decarboxylation of UDP-glucuronic acid (UDP-GlcUA) to UDP-4-keto-arabinose (UDP-Ara4O) and the addition of a formyl group to UDP-4-amino-4-deoxy-L-arabinose (UDP-L-Ara4N) to form UDP-L-4-formamido-arabinose (UDP-L-Ara4FN). The modified arabinose is attached to lipid A and is required for resistance to polymyxin and cationic antimicrobial peptides. The sequence is that of Bifunctional polymyxin resistance protein ArnA from Pseudomonas paraeruginosa (strain DSM 24068 / PA7) (Pseudomonas aeruginosa (strain PA7)).